An 807-amino-acid chain; its full sequence is MSGWQRIYYKLLNLPLQVLVKSKSIPAEPAQELGLDTSRPVMYVLPYNSKADLLTLRAQCLAHDLPDPLEPLEIDGALLPRYVFIHGGPRVFTYYTPKEESIKLFHDYLDLHRNHPDLDVQMVPVSVMFGRSPGREKGEVNPPLRMLNGIQKFFAVSWLGRDSFVRFSPSVSLRRMADEHGTDKIIAQKLARVARMHFARQRLAAVGPRLPARQDLFNKLLASKAIARAVEDEARSKKISHEKAQQNAIALMEEIAANFSYEMIRLTDRILGFTWNRLYQGINVHNAERVRQLAHDGHEIVYVPCHRSHMDYLLLSYVLYHQGLVPPHIAAGINLNFWPAGPIFRRLGAFFIRRTFKGNKLYSTVFREYLGELFSRGYSVEYFVEGGRSRTGRLLDPKTGTLSMTIQAMLRGGTRPITLVPIYIGYEHVMEVGTYAKELRGATKEKESLPQMVRGLSKLRNLGQGYVNFGEPLPLMTYLNQHVPDWREAIDPIEAVRPSWLTPTVNSIAADLMVRINNAGAANAMNLCCTALLASRQRSLTREQLTQQLECYLALLRNVPYSPDATAPSASASELIDHALQMNKFEVEKDTIGDIIILPREQAVLMTYYRNNIAHMLVMPSLLAALVTQHRHLSRAEVLRHVETLYPFLKAELFLRWEKAELAGVVDALIAEMLRQELIVVDGDVMSLNPSHSRSLQLLAAGARETLQRYAITFWLLSANPAINRSSLEKESRTVAQRLSVLHGINAPEFFDKAVFSTLVLTLRDEGYISDTGDAEPEETLKVYRMLADLITSDVRLTIESVTQDDA.

Positions 305–310 (CHRSHM) match the HXXXXD motif motif.

The protein belongs to the GPAT/DAPAT family.

The protein resides in the cell inner membrane. The enzyme catalyses sn-glycerol 3-phosphate + an acyl-CoA = a 1-acyl-sn-glycero-3-phosphate + CoA. It participates in phospholipid metabolism; CDP-diacylglycerol biosynthesis; CDP-diacylglycerol from sn-glycerol 3-phosphate: step 1/3. This Klebsiella pneumoniae subsp. pneumoniae (strain ATCC 700721 / MGH 78578) protein is Glycerol-3-phosphate acyltransferase.